Consider the following 521-residue polypeptide: Vang-like protein 2 (521 aa).

The tract at residues 1–81 (MDTESQYSGY…TTVVTGTSEH (81 aa)) is disordered. The Cytoplasmic portion of the chain corresponds to 1-108 (MDTESQYSGY…VPLDCSRHLG (108 aa)). Residues 15-33 (GHSRSSRKHRDRRDRHRSK) show a composition bias toward basic residues. Positions 57–67 (ESTRGDERDDN) are enriched in basic and acidic residues. Residues 69–81 (GETTTVVTGTSEH) show a composition bias toward low complexity. The chain crosses the membrane as a helical span at residues 109–129 (VAAGATLALLSFLTPLAFLLL). The Extracellular segment spans residues 130–147 (PPLLWREELEPCGTACEG). A helical membrane pass occupies residues 148-168 (LFISVAFKLLILLLGSWALFF). Residues 169–178 (RRPKASLPRV) are Cytoplasmic-facing. The chain crosses the membrane as a helical span at residues 179–199 (FVLRALLMVLVFLLVVSYWLF). At 200-217 (YGVRILDARERSYQGVVQ) the chain is on the extracellular side. The chain crosses the membrane as a helical span at residues 218–238 (FAVSLVDALLFVHYLAVVLLE). Topologically, residues 239–521 (LRQLQPQFTL…VMRLQSETSV (283 aa)) are cytoplasmic.

It belongs to the Vang family. In terms of assembly, homodimer and heterodimer with VANGL1. Interacts through its C-terminal region with the N-terminal half of DVL1, DVL2 and DVL3. The PDZ domain of DVL1, DVL2 and DVL3 is required for the interaction. Also interacts with the PDZ domains of MAGI3, SCRIB/SCRB1 and FZD3. Interacts with PRICKLE3.

It is found in the cell membrane. Functionally, involved in the control of early morphogenesis and patterning of both axial midline structures and the development of neural plate. Plays a role in the regulation of planar cell polarity, particularly in the orientation of stereociliary bundles in the cochlea. Required for polarization and movement of myocardializing cells in the outflow tract and seems to act via RHOA signaling to regulate this process. Required for cell surface localization of FZD3 and FZD6 in the inner ear. In Homo sapiens (Human), this protein is Vang-like protein 2 (VANGL2).